We begin with the raw amino-acid sequence, 377 residues long: Opsin-1 (377 aa).

At 1 to 58 (MDPGPGLAALQAWAAKSPAYGAANQTVVDKVPPDMMHMIDPHWYQFPPMNPLWHALLG) the chain is on the extracellular side. N-linked (GlcNAc...) asparagine glycosylation is present at asparagine 24. Residues 59–79 (FTIGVLGFVSISGNGMVIYIF) traverse the membrane as a helical segment. At 80–92 (MSTKSLKTPSNLL) the chain is on the cytoplasmic side. The chain crosses the membrane as a helical span at residues 93 to 113 (VVNLAFSDFLMMCAMSPAMVV). At 114-129 (NCYYETWVWGPFACEL) the chain is on the extracellular side. A disulfide bridge links cysteine 127 with cysteine 204. A helical membrane pass occupies residues 130–150 (YACAGSLFGCASIWTMTMIAF). The Cytoplasmic segment spans residues 151–169 (DRYNVIVKGIAAKPMTSNG). Residues 170–190 (ALLRILGIWVFSLAWTLLPFF) traverse the membrane as a helical segment. The Extracellular segment spans residues 191 to 220 (GWNRYVPEGNMTACGTDYLSKSWVSRSYIL). An N-linked (GlcNAc...) asparagine glycan is attached at asparagine 200. The chain crosses the membrane as a helical span at residues 221–241 (IYSVFVYFLPLLLIIYSYFFI). At 242-280 (VQAVAAHEKAMREQAKKMNVASLRSSEAANTSAECKLAK) the chain is on the cytoplasmic side. Residues 281–301 (VALMTISLWFMAWTPYLVINY) traverse the membrane as a helical segment. Over 302 to 312 (TGVFESAPISP) the chain is Extracellular. Residues 313–335 (LATIWGSLFAKANAVYNPIVYGI) traverse the membrane as a helical segment. Residues 336-377 (SHPKYQAALYAKFPSLQCQSAPEDAGSVASGTTAVSEEKPAA) are Cytoplasmic-facing. The interval 357–377 (PEDAGSVASGTTAVSEEKPAA) is disordered.

It belongs to the G-protein coupled receptor 1 family. Opsin subfamily. In terms of tissue distribution, in the retina, expression is abundant and uniform in the anterior-posterior and oblique cells of the retinulae, with some expression in the proximal cells. There is no expression in the dorsal rim retinulae (at protein level).

The protein resides in the cell projection. It localises to the rhabdomere membrane. Visual pigments are the light-absorbing molecules that mediate vision. They consist of an apoprotein, opsin, covalently linked to cis-retinal. May play a role in photoperiodic photoreception. The sequence is that of Opsin-1 (OP1) from Manduca sexta (Tobacco hawkmoth).